The following is a 201-amino-acid chain: 3-isopropylmalate dehydratase small subunit (201 aa).

This sequence belongs to the LeuD family. LeuD type 1 subfamily. In terms of assembly, heterodimer of LeuC and LeuD.

It carries out the reaction (2R,3S)-3-isopropylmalate = (2S)-2-isopropylmalate. It participates in amino-acid biosynthesis; L-leucine biosynthesis; L-leucine from 3-methyl-2-oxobutanoate: step 2/4. Catalyzes the isomerization between 2-isopropylmalate and 3-isopropylmalate, via the formation of 2-isopropylmaleate. This is 3-isopropylmalate dehydratase small subunit from Shewanella putrefaciens (strain CN-32 / ATCC BAA-453).